A 525-amino-acid chain; its full sequence is Ubiquitin carboxyl-terminal hydrolase 22 (525 aa).

The UBP-type zinc finger occupies 21 to 138 (PGCSHLGSFK…KEEQRKAWKM (118 aa)). Residues C23, H25, C63, C66, C76, C79, C84, H89, H93, H99, C112, and C115 each coordinate Zn(2+). Residue K129 is modified to N6-acetyllysine. T147 carries the post-translational modification Phosphothreonine; by CDK1. Residues 176–520 (RGLINLGNTC…EGYLLFYHKQ (345 aa)) form the USP domain. Residue C185 is the Nucleophile of the active site. Position 237 is a phosphoserine; by CDK1 (S237). H479 serves as the catalytic Proton acceptor.

This sequence belongs to the peptidase C19 family. UBP8 subfamily. As to quaternary structure, component of some SAGA transcription coactivator-HAT complexes, at least composed of ATXN7, ATXN7L3, ENY2, GCN5L2, SUPT3H, TAF10, TRRAP and USP22. Within the SAGA complex, ATXN7L3, ENY2 and USP22 form a subcomplex required for histone deubiquitination. Interacts directly with ATXN7L3; leading to its recruitment to the SAGA complex. Interacts with ATXN7L3 and weakly with ATXN7L3B. Interacts with MED1. In terms of processing, phosphorylated in G2/M phase, but not in G1 phase by CDK1. Ubiquitinated and subsequently degraded in a CDC20-dependent manner. In terms of tissue distribution, moderately expressed in various tissues including heart and skeletal muscle, and weakly expressed in lung and liver.

The protein resides in the nucleus. It is found in the cytoplasm. The enzyme catalyses Thiol-dependent hydrolysis of ester, thioester, amide, peptide and isopeptide bonds formed by the C-terminal Gly of ubiquitin (a 76-residue protein attached to proteins as an intracellular targeting signal).. Functionally, deubiquitinase that plays a role in several cellular processes including transcriptional regulation, cell cycle progression or innate immunity. As part of the transcription regulatory histone acetylation (HAT) complex SAGA, catalyzes the deubiquitination of both histones H2A and H2B, thereby acting as a transcriptional coactivator. Recruited to specific gene promoters by activators such as MYC, where it is required for transcription. Facilitates cell-cycle progression by stabilizing CCNB1 and antagonizing its proteasome-mediated degradation in a cell cycle-specific manner. Modulates cell cycle progression and apoptosis also by antagonizing TP53 transcriptional activation through deacetylase SIRT1 stabilization. Plays multiple roles in immunity and inflammation. Participates in antiviral response by deubiquitinating the importin KPNA2, leading to IRF3 nuclear translocation and subsequent type I interferon production. Acts as a central regulator of type III IFN signaling by negatively regulating STING1 activation and ubiquitination. Inhibits NLRP3 inflammasome activation by promoting NLRP3 degradation through ATG5-dependent autophagy. Deubiquitinates CD274 to induce its stabilization and thereby participates in maintenance of immune tolerance to self. Controls necroptotic cell death by regulating RIPK3 phosphorylation and ubiquitination. During bacterial infection, promotes pro-inflammatory response by targeting TRAF6 and removing its 'Lys-48'-linked polyubiquitination. The chain is Ubiquitin carboxyl-terminal hydrolase 22 (USP22) from Homo sapiens (Human).